The sequence spans 160 residues: Serine-protein kinase RsbW (160 aa).

Belongs to the anti-sigma-factor family.

The enzyme catalyses L-seryl-[protein] + ATP = O-phospho-L-seryl-[protein] + ADP + H(+). It catalyses the reaction L-threonyl-[protein] + ATP = O-phospho-L-threonyl-[protein] + ADP + H(+). Functionally, negative regulator of sigma-B activity. Phosphorylates and inactivates its specific antagonist protein, RsbV. Upon phosphorylation of RsbV, RsbW is released and binds to sigma-B, thereby blocking its ability to form an RNA polymerase holoenzyme (E-sigma-B). The polypeptide is Serine-protein kinase RsbW (Bacillus cereus (strain G9842)).